A 419-amino-acid chain; its full sequence is UDP-N-acetylglucosamine 1-carboxyvinyltransferase (419 aa).

22–23 contributes to the phosphoenolpyruvate binding site; the sequence is KN. A UDP-N-acetyl-alpha-D-glucosamine-binding site is contributed by Arg-91. Residue Cys-115 is the Proton donor of the active site. Cys-115 carries the 2-(S-cysteinyl)pyruvic acid O-phosphothioketal modification. Residues 120-124, 160-163, Asp-305, and Ile-327 each bind UDP-N-acetyl-alpha-D-glucosamine; these read RPVDL and KVSV.

This sequence belongs to the EPSP synthase family. MurA subfamily.

Its subcellular location is the cytoplasm. It carries out the reaction phosphoenolpyruvate + UDP-N-acetyl-alpha-D-glucosamine = UDP-N-acetyl-3-O-(1-carboxyvinyl)-alpha-D-glucosamine + phosphate. The protein operates within cell wall biogenesis; peptidoglycan biosynthesis. Cell wall formation. Adds enolpyruvyl to UDP-N-acetylglucosamine. This is UDP-N-acetylglucosamine 1-carboxyvinyltransferase from Sodalis glossinidius (strain morsitans).